The chain runs to 384 residues: Galactokinase (384 aa).

34 to 37 lines the substrate pocket; sequence EHTD. 123-129 lines the ATP pocket; that stretch reads SSGLSSS. Mg(2+)-binding residues include S129 and E161. D173 serves as the catalytic Proton acceptor. Y222 provides a ligand contact to substrate.

This sequence belongs to the GHMP kinase family. GalK subfamily.

It is found in the cytoplasm. The enzyme catalyses alpha-D-galactose + ATP = alpha-D-galactose 1-phosphate + ADP + H(+). It participates in carbohydrate metabolism; galactose metabolism. Functionally, catalyzes the transfer of the gamma-phosphate of ATP to D-galactose to form alpha-D-galactose-1-phosphate (Gal-1-P). This chain is Galactokinase, found in Actinobacillus pleuropneumoniae serotype 3 (strain JL03).